Reading from the N-terminus, the 344-residue chain is Dihydroorotate dehydrogenase (quinone) (344 aa).

FMN contacts are provided by residues 65–69 and Thr-89; that span reads AGLDK. Position 69 (Lys-69) interacts with substrate. 114-118 contributes to the substrate binding site; it reads NRMGF. FMN-binding residues include Asn-145 and Asn-178. Residue Asn-178 coordinates substrate. The active-site Nucleophile is Ser-181. Residue Asn-183 participates in substrate binding. The FMN site is built by Lys-223 and Thr-251. Residue 252-253 coordinates substrate; that stretch reads NT. Residues Gly-274, Gly-303, and 324-325 contribute to the FMN site; that span reads YS.

Belongs to the dihydroorotate dehydrogenase family. Type 2 subfamily. Monomer. The cofactor is FMN.

Its subcellular location is the cell membrane. It carries out the reaction (S)-dihydroorotate + a quinone = orotate + a quinol. It functions in the pathway pyrimidine metabolism; UMP biosynthesis via de novo pathway; orotate from (S)-dihydroorotate (quinone route): step 1/1. Functionally, catalyzes the conversion of dihydroorotate to orotate with quinone as electron acceptor. The sequence is that of Dihydroorotate dehydrogenase (quinone) from Cupriavidus necator (strain ATCC 17699 / DSM 428 / KCTC 22496 / NCIMB 10442 / H16 / Stanier 337) (Ralstonia eutropha).